The chain runs to 462 residues: Fumarate hydratase class II (462 aa).

Substrate-binding positions include 97-99, 127-130, 137-139, and Thr-185; these read SGT, HPND, and SSN. The active-site Proton donor/acceptor is His-186. Ser-316 is an active-site residue. Substrate contacts are provided by residues Ser-317 and 322–324; that span reads KVN.

Belongs to the class-II fumarase/aspartase family. Fumarase subfamily. In terms of assembly, homotetramer.

It localises to the cytoplasm. The enzyme catalyses (S)-malate = fumarate + H2O. It participates in carbohydrate metabolism; tricarboxylic acid cycle; (S)-malate from fumarate: step 1/1. Functionally, involved in the TCA cycle. Catalyzes the stereospecific interconversion of fumarate to L-malate. The protein is Fumarate hydratase class II of Bacillus anthracis.